Here is a 191-residue protein sequence, read N- to C-terminus: Probable chemoreceptor glutamine deamidase CheD (191 aa).

It belongs to the CheD family.

The enzyme catalyses L-glutaminyl-[protein] + H2O = L-glutamyl-[protein] + NH4(+). In terms of biological role, probably deamidates glutamine residues to glutamate on methyl-accepting chemotaxis receptors (MCPs), playing an important role in chemotaxis. This Hydrogenovibrio crunogenus (strain DSM 25203 / XCL-2) (Thiomicrospira crunogena) protein is Probable chemoreceptor glutamine deamidase CheD.